A 243-amino-acid chain; its full sequence is Carboxy-S-adenosyl-L-methionine synthase (243 aa).

S-adenosyl-L-methionine contacts are provided by residues Tyr-40, 65 to 67 (GCS), 90 to 91 (DN), 118 to 119 (DI), Asn-133, and Arg-200.

It belongs to the class I-like SAM-binding methyltransferase superfamily. Cx-SAM synthase family. As to quaternary structure, homodimer.

It carries out the reaction prephenate + S-adenosyl-L-methionine = carboxy-S-adenosyl-L-methionine + 3-phenylpyruvate + H2O. Catalyzes the conversion of S-adenosyl-L-methionine (SAM) to carboxy-S-adenosyl-L-methionine (Cx-SAM). The chain is Carboxy-S-adenosyl-L-methionine synthase from Shewanella woodyi (strain ATCC 51908 / MS32).